A 469-amino-acid polypeptide reads, in one-letter code: Glutamate--tRNA ligase 1 (469 aa).

A 'HIGH' region motif is present at residues 10–20 (PSPTGYLHVGG). A 'KMSKS' region motif is present at residues 252–256 (KLSKR). Residue Lys-255 coordinates ATP.

This sequence belongs to the class-I aminoacyl-tRNA synthetase family. Glutamate--tRNA ligase type 1 subfamily. In terms of assembly, monomer.

It is found in the cytoplasm. The catalysed reaction is tRNA(Glu) + L-glutamate + ATP = L-glutamyl-tRNA(Glu) + AMP + diphosphate. Catalyzes the attachment of glutamate to tRNA(Glu) in a two-step reaction: glutamate is first activated by ATP to form Glu-AMP and then transferred to the acceptor end of tRNA(Glu). This Fervidobacterium nodosum (strain ATCC 35602 / DSM 5306 / Rt17-B1) protein is Glutamate--tRNA ligase 1.